The following is an 816-amino-acid chain: Leucine--tRNA ligase (816 aa).

The 'HIGH' region signature appears at 46–56 (PYPSGALHMGH). Positions 638–642 (KMSKS) match the 'KMSKS' region motif. Lys-641 provides a ligand contact to ATP.

It belongs to the class-I aminoacyl-tRNA synthetase family.

The protein resides in the cytoplasm. The catalysed reaction is tRNA(Leu) + L-leucine + ATP = L-leucyl-tRNA(Leu) + AMP + diphosphate. This is Leucine--tRNA ligase from Xanthomonas campestris pv. campestris (strain ATCC 33913 / DSM 3586 / NCPPB 528 / LMG 568 / P 25).